Reading from the N-terminus, the 723-residue chain is Threonine--tRNA ligase 1, cytoplasmic (723 aa).

The segment at 1-46 is disordered; sequence MFEEKASSPSGKMGGEEKPIGAGEEKQKEGGKKKNKEGSGDGGRAE. The segment covering 14–39 has biased composition (basic and acidic residues); it reads GGEEKPIGAGEEKQKEGGKKKNKEGS. Ser39 carries the phosphoserine modification. One can recognise a TGS domain in the interval 79–143; sequence DSKPIKVTLP…EEDCTLELLK (65 aa). N6-acetyllysine is present on Lys243. Thr246 is subject to Phosphothreonine. Tyr298 is modified (phosphotyrosine). At Thr453 the chain carries Phosphothreonine. Ser702 carries the phosphoserine modification.

It belongs to the class-II aminoacyl-tRNA synthetase family. In terms of assembly, homodimer. ISGylated.

Its subcellular location is the cytoplasm. The enzyme catalyses tRNA(Thr) + L-threonine + ATP = L-threonyl-tRNA(Thr) + AMP + diphosphate + H(+). With respect to regulation, inhibited by borrelidin (BN, IC 50 is 7 nM), which binds to 4 distinct subsites in the protein, preventing binding of all 3 substrates. In terms of biological role, catalyzes the attachment of threonine to tRNA(Thr) in a two-step reaction: threonine is first activated by ATP to form Thr-AMP and then transferred to the acceptor end of tRNA(Thr). Also edits incorrectly charged tRNA(Thr) via its editing domain, at the post-transfer stage. This is Threonine--tRNA ligase 1, cytoplasmic from Homo sapiens (Human).